The primary structure comprises 201 residues: MAKTKTGIFSGSFNPIHIGHLALANYLCEFEGLDEVWFMVTPHNPFKNQADLWPDELRLQLVQLAIEGYPRFRVSDFEFHLPRPSYTIHTLNRLKQEYPEREFQLIIGSDNWMVFDRWFESERIVSENKILVYPRPGFSVDKSQLPPNVHVADSPIFEISSTFIREALATGKDIRYFLHPAVYKRIIQQTDSIDSSHSCHT.

Belongs to the NadD family.

The catalysed reaction is nicotinate beta-D-ribonucleotide + ATP + H(+) = deamido-NAD(+) + diphosphate. It functions in the pathway cofactor biosynthesis; NAD(+) biosynthesis; deamido-NAD(+) from nicotinate D-ribonucleotide: step 1/1. Catalyzes the reversible adenylation of nicotinate mononucleotide (NaMN) to nicotinic acid adenine dinucleotide (NaAD). This is Probable nicotinate-nucleotide adenylyltransferase from Bacteroides fragilis (strain YCH46).